The primary structure comprises 125 residues: Fluoride-specific ion channel FluC (125 aa).

4 helical membrane passes run 3–23 (FILI…VSKV), 33–53 (IPLG…FVLF), 65–85 (FVLF…TFAY), and 99–119 (LVYF…GMVL). Na(+) is bound by residues glycine 75 and threonine 78.

Belongs to the fluoride channel Fluc/FEX (TC 1.A.43) family.

The protein localises to the cell inner membrane. It carries out the reaction fluoride(in) = fluoride(out). Its activity is regulated as follows. Na(+) is not transported, but it plays an essential structural role and its presence is essential for fluoride channel function. In terms of biological role, fluoride-specific ion channel. Important for reducing fluoride concentration in the cell, thus reducing its toxicity. This Thermosipho melanesiensis (strain DSM 12029 / CIP 104789 / BI429) protein is Fluoride-specific ion channel FluC.